The following is a 450-amino-acid chain: Phosphoglucosamine mutase (450 aa).

Ser-102 functions as the Phosphoserine intermediate in the catalytic mechanism. Mg(2+) is bound by residues Ser-102, Asp-243, Asp-245, and Asp-247. Ser-102 bears the Phosphoserine mark.

It belongs to the phosphohexose mutase family. Mg(2+) serves as cofactor. Activated by phosphorylation.

It carries out the reaction alpha-D-glucosamine 1-phosphate = D-glucosamine 6-phosphate. Catalyzes the conversion of glucosamine-6-phosphate to glucosamine-1-phosphate. The sequence is that of Phosphoglucosamine mutase from Mesorhizobium japonicum (strain LMG 29417 / CECT 9101 / MAFF 303099) (Mesorhizobium loti (strain MAFF 303099)).